Reading from the N-terminus, the 244-residue chain is Probable proteasome subunit alpha type-1 (244 aa).

This sequence belongs to the peptidase T1A family. The 26S proteasome consists of a 20S proteasome core and two 19S regulatory subunits. The 20S proteasome core is composed of 28 subunits that are arranged in four stacked rings, resulting in a barrel-shaped structure. The two end rings are each formed by seven alpha subunits, and the two central rings are each formed by seven beta subunits. The catalytic chamber with the active sites is on the inside of the barrel.

It is found in the cytoplasm. The protein resides in the nucleus. In terms of biological role, the proteasome is a multicatalytic proteinase complex which is characterized by its ability to cleave peptides with Arg, Phe, Tyr, Leu, and Glu adjacent to the leaving group at neutral or slightly basic pH. The proteasome has an ATP-dependent proteolytic activity. In Schizosaccharomyces pombe (strain 972 / ATCC 24843) (Fission yeast), this protein is Probable proteasome subunit alpha type-1.